A 749-amino-acid polypeptide reads, in one-letter code: Disintegrin and metalloproteinase domain-containing protein 10 (749 aa).

The signal sequence occupies residues 1–19; sequence MVLPTVLILLLSWAAGLGG. Positions 20-214 are excised as a propeptide; the sequence is QYGNPLNKYI…SGPELLRKKR (195 aa). Residues 20–673 lie on the Extracellular side of the membrane; the sequence is QYGNPLNKYI…SPQLYENIAE (654 aa). The Cysteine switch motif lies at 171–178; it reads GGCADHSV. Cys-173 lines the Zn(2+) pocket. The region spanning 221–457 is the Peptidase M12B domain; that stretch reads NTCQLYIQTD…KRNNCFVESG (237 aa). Disulfide bonds link Cys-223–Cys-314, Cys-345–Cys-452, Cys-400–Cys-436, Cys-461–Cys-496, Cys-472–Cys-485, Cys-474–Cys-480, Cys-484–Cys-516, Cys-504–Cys-512, Cys-511–Cys-537, Cys-525–Cys-544, Cys-531–Cys-563, Cys-556–Cys-568, Cys-573–Cys-599, Cys-581–Cys-608, Cys-583–Cys-598, Cys-595–Cys-640, and Cys-633–Cys-646. Residues Asn-268 and Asn-279 are each glycosylated (N-linked (GlcNAc...) asparagine). Position 384 (His-384) interacts with Zn(2+). Residue Glu-385 is part of the active site. Residues His-388 and His-394 each contribute to the Zn(2+) site. N-linked (GlcNAc...) asparagine glycosylation is present at Asn-440. A Disintegrin domain is found at 458–552; the sequence is QPICGNGMVE…LCPASDPKPN (95 aa). Asn-552 carries an N-linked (GlcNAc...) asparagine glycan. A helical transmembrane segment spans residues 674–694; sequence WIVAHWWAVLLMGIALIMLMA. The Cytoplasmic segment spans residues 695–749; sequence GFIKICSVHTPSSNPKLPPPKPLPGTLKRRRPPQPIQQPPRQRPRESYQMGHMRR. Positions 705-749 are disordered; the sequence is PSSNPKLPPPKPLPGTLKRRRPPQPIQQPPRQRPRESYQMGHMRR. The short motif at 709–716 is the SH3-binding element; sequence PKLPPPKP. Thr-720 is modified (phosphothreonine). The short motif at 723 to 729 is the SH3-binding element; that stretch reads RRRPPQP. Positions 735 to 749 are interaction with AP2A1, AP2A2 and AP2M1; that stretch reads RQRPRESYQMGHMRR.

As to quaternary structure, forms a ternary EFNA5-EPHA3-ADAM10 complex mediating EFNA5 extracellular domain shedding by ADAM10 which regulates the EFNA5-EPHA3 complex internalization and function, the cleavage occurs in trans, with ADAM10 and its substrate being on the membranes of opposing cells. Interacts with the clathrin adapter AP2 complex subunits AP2A1, AP2A2, AP2B1, and AP2M1; this interaction facilitates ADAM10 endocytosis from the plasma membrane during long-term potentiation in hippocampal neurons. Forms a ternary complex composed of ADAM10, EPHA4 and CADH1; within the complex, ADAM10 cleaves CADH1 which disrupts adherens junctions. Interacts with EPHA2. Interacts with NGF in a divalent cation-dependent manner. Interacts with TSPAN14; the interaction promotes ADAM10 maturation and cell surface expression. Interacts with TSPAN5, TSPAN10, TSPAN14, TSPAN15, TSPAN17 and TSPAN33; these interactions regulate ADAM10 substrate specificity, endocytosis and turnover. Interacts (via extracellular domain) with TSPAN33 (via extracellular domain) and (via cytoplasmic domain) with AFDN; interaction with TSPAN33 allows the docking of ADAM10 to zonula adherens through a PDZ11-dependent interaction between TSPAN33 and PLEKHA7 while interaction with AFDN locks ADAM10 at zonula adherens. Interacts with DLG1; this interaction recruits ADAM10 to the cell membrane during long-term depression in hippocampal neurons. Interacts (via extracellular domain) with BACE1 (via extracellular domain). Interacts with FAM171A1. Requires Zn(2+) as cofactor. Post-translationally, the precursor is cleaved by furin and PCSK7. As to expression, expressed in the brain, specifically in neurons and astrocytes (at protein level). Expressed in inner and outer pillar cells of the organ of Corti (at protein level). Expressed in kidney and lung.

The protein localises to the cell membrane. It is found in the golgi apparatus membrane. Its subcellular location is the cytoplasmic vesicle. It localises to the clathrin-coated vesicle. The protein resides in the cell projection. The protein localises to the axon. It is found in the dendrite. Its subcellular location is the cell junction. It localises to the adherens junction. The protein resides in the cytoplasm. It catalyses the reaction Endopeptidase of broad specificity.. Its activity is regulated as follows. Catalytically inactive when the propeptide is intact and associated with the mature enzyme. The disintegrin and cysteine-rich regions modulate access of substrates to exerts an inhibitory effect on the cleavage of ADAM10 substrates. Functionally, transmembrane metalloprotease which mediates the ectodomain shedding of a myriad of transmembrane proteins, including adhesion proteins, growth factor precursors and cytokines being essential for development and tissue homeostasis. Associates with six members of the tetraspanin superfamily TspanC8 which regulate its exit from the endoplasmic reticulum and its substrate selectivity. Cleaves the membrane-bound precursor of TNF-alpha to its mature soluble form. Responsible for the proteolytical release of soluble JAM3 from endothelial cells surface. Responsible for the proteolytic release of several other cell-surface proteins, including heparin-binding epidermal growth-like factor, ephrin-A2, CD44, CDH2 and for constitutive and regulated alpha-secretase cleavage of amyloid precursor protein (APP) at '687-Lys-|-Leu-688'. Contributes to the normal cleavage of the cellular prion protein. Involved in the cleavage of the adhesion molecule L1 at the cell surface and in released membrane vesicles, suggesting a vesicle-based protease activity. Also controls the proteolytic processing of Notch and mediates lateral inhibition during neurogenesis. Required for the development of type 1 transitional B cells into marginal zone B cells, probably by cleaving Notch. Responsible for the FasL ectodomain shedding and for the generation of the remnant ADAM10-processed FasL (FasL APL) transmembrane form. Also cleaves the ectodomain of the integral membrane proteins CORIN and ITM2B. Mediates the proteolytic cleavage of LAG3, leading to release the secreted form of LAG3. Mediates the proteolytic cleavage of IL6R and IL11RA, leading to the release of secreted forms of IL6R and IL11RA. Enhances the cleavage of CHL1 by BACE1. Cleaves NRCAM. Cleaves TREM2, resulting in shedding of the TREM2 ectodomain. Involved in the development and maturation of glomerular and coronary vasculature. During development of the cochlear organ of Corti, promotes pillar cell separation by forming a ternary complex with CADH1 and EPHA4 and cleaving CADH1 at adherens junctions. May regulate the EFNA5-EPHA3 signaling. This chain is Disintegrin and metalloproteinase domain-containing protein 10 (Adam10), found in Mus musculus (Mouse).